The sequence spans 420 residues: UDP-N-acetylglucosamine 1-carboxyvinyltransferase (420 aa).

22 to 23 (KN) contacts phosphoenolpyruvate. Arg94 contacts UDP-N-acetyl-alpha-D-glucosamine. Cys118 functions as the Proton donor in the catalytic mechanism. Cys118 is modified (2-(S-cysteinyl)pyruvic acid O-phosphothioketal). The UDP-N-acetyl-alpha-D-glucosamine site is built by Asp306 and Ile328.

This sequence belongs to the EPSP synthase family. MurA subfamily.

The protein resides in the cytoplasm. It carries out the reaction phosphoenolpyruvate + UDP-N-acetyl-alpha-D-glucosamine = UDP-N-acetyl-3-O-(1-carboxyvinyl)-alpha-D-glucosamine + phosphate. It participates in cell wall biogenesis; peptidoglycan biosynthesis. Functionally, cell wall formation. Adds enolpyruvyl to UDP-N-acetylglucosamine. The chain is UDP-N-acetylglucosamine 1-carboxyvinyltransferase from Jannaschia sp. (strain CCS1).